Consider the following 74-residue polypeptide: Peptide BmKb2 (74 aa).

The first 22 residues, 1–22 (MEIKYLLTVFLVLLIVSDHCQA), serve as a signal peptide directing secretion. The residue at position 40 (Lys40) is a Lysine amide. Positions 46–74 (DLNGQIDHFKNFRKRDAELEELLSKLPIY) are excised as a propeptide.

This sequence belongs to the non-disulfide-bridged peptide (NDBP) superfamily. Short antimicrobial peptide (group 4) family.

Its subcellular location is the secreted. It localises to the target cell membrane. Functionally, antibacterial peptide. This peptide gene is up-regulated at the transcriptional level after the venom gland is challenged by Gram-positive bacteria. The chain is Peptide BmKb2 from Olivierus martensii (Manchurian scorpion).